The primary structure comprises 267 residues: Chlorophyll a-b binding protein 3A, chloroplastic (267 aa).

The transit peptide at 1 to 34 directs the protein to the chloroplast; it reads MAASTMALSSSTFAGKTVKLAPSSSEITGNGRIT. Residues 153-173 traverse the membrane as a helical segment; sequence LVHAQSILAIWACQVVLMGAV. Positions 154, 158, 166, 174, 177, and 183 each coordinate chlorophyll b. Residues Lys214, Glu215, Asn218, Arg220, Gln232, His247, and Ala256 each coordinate chlorophyll a. Residues 221–241 form a helical membrane-spanning segment; that stretch reads LAMFSMFGFFVQAIVTGKGPL. Position 263 (Phe263) interacts with chlorophyll b.

It belongs to the light-harvesting chlorophyll a/b-binding (LHC) protein family. The LHC complex consists of chlorophyll a-b binding proteins. Binds at least 14 chlorophylls (8 Chl-a and 6 Chl-b) and carotenoids such as lutein and neoxanthin. serves as cofactor. Photoregulated by reversible phosphorylation of its threonine residues.

The protein resides in the plastid. Its subcellular location is the chloroplast thylakoid membrane. In terms of biological role, the light-harvesting complex (LHC) functions as a light receptor, it captures and delivers excitation energy to photosystems with which it is closely associated. The protein is Chlorophyll a-b binding protein 3A, chloroplastic (CAB3A) of Solanum lycopersicum (Tomato).